We begin with the raw amino-acid sequence, 714 residues long: DNA ligase (714 aa).

NAD(+) contacts are provided by residues 47–51 (DAEYD), 96–97 (SL), and Glu-128. Residue Lys-130 is the N6-AMP-lysine intermediate of the active site. NAD(+) is bound by residues Arg-151, Glu-188, Lys-306, and Lys-330. Zn(2+) is bound by residues Cys-435, Cys-438, Cys-453, and Cys-459. The BRCT domain occupies 637-714 (RRDTAVAGKT…TEDEWLALIS (78 aa)).

Belongs to the NAD-dependent DNA ligase family. LigA subfamily. Mg(2+) serves as cofactor. Mn(2+) is required as a cofactor.

The catalysed reaction is NAD(+) + (deoxyribonucleotide)n-3'-hydroxyl + 5'-phospho-(deoxyribonucleotide)m = (deoxyribonucleotide)n+m + AMP + beta-nicotinamide D-nucleotide.. Functionally, DNA ligase that catalyzes the formation of phosphodiester linkages between 5'-phosphoryl and 3'-hydroxyl groups in double-stranded DNA using NAD as a coenzyme and as the energy source for the reaction. It is essential for DNA replication and repair of damaged DNA. This is DNA ligase from Rhodopseudomonas palustris (strain HaA2).